The primary structure comprises 312 residues: Malate dehydrogenase (312 aa).

Residues 10 to 15 (GAGNTG) and aspartate 34 each bind NAD(+). Substrate contacts are provided by arginine 85 and arginine 91. NAD(+) contacts are provided by residues asparagine 98 and 121–123 (LTN). Positions 123 and 154 each coordinate substrate. Histidine 178 serves as the catalytic Proton acceptor.

Belongs to the LDH/MDH superfamily. MDH type 3 family.

The enzyme catalyses (S)-malate + NAD(+) = oxaloacetate + NADH + H(+). Its function is as follows. Catalyzes the reversible oxidation of malate to oxaloacetate. The protein is Malate dehydrogenase of Staphylococcus saprophyticus subsp. saprophyticus (strain ATCC 15305 / DSM 20229 / NCIMB 8711 / NCTC 7292 / S-41).